The primary structure comprises 161 residues: Protein-export protein SecB (161 aa).

This sequence belongs to the SecB family. Homotetramer, a dimer of dimers. One homotetramer interacts with 1 SecA dimer.

The protein resides in the cytoplasm. Functionally, one of the proteins required for the normal export of preproteins out of the cell cytoplasm. It is a molecular chaperone that binds to a subset of precursor proteins, maintaining them in a translocation-competent state. It also specifically binds to its receptor SecA. The polypeptide is Protein-export protein SecB (Coxiella burnetii (strain CbuG_Q212) (Coxiella burnetii (strain Q212))).